Consider the following 341-residue polypeptide: UDP-3-O-acylglucosamine N-acyltransferase (341 aa).

H255 acts as the Proton acceptor in catalysis.

The protein belongs to the transferase hexapeptide repeat family. LpxD subfamily. As to quaternary structure, homotrimer.

The enzyme catalyses a UDP-3-O-[(3R)-3-hydroxyacyl]-alpha-D-glucosamine + a (3R)-hydroxyacyl-[ACP] = a UDP-2-N,3-O-bis[(3R)-3-hydroxyacyl]-alpha-D-glucosamine + holo-[ACP] + H(+). It functions in the pathway bacterial outer membrane biogenesis; LPS lipid A biosynthesis. Functionally, catalyzes the N-acylation of UDP-3-O-acylglucosamine using 3-hydroxyacyl-ACP as the acyl donor. Is involved in the biosynthesis of lipid A, a phosphorylated glycolipid that anchors the lipopolysaccharide to the outer membrane of the cell. The chain is UDP-3-O-acylglucosamine N-acyltransferase from Granulibacter bethesdensis (strain ATCC BAA-1260 / CGDNIH1).